We begin with the raw amino-acid sequence, 314 residues long: Acetyl-coenzyme A carboxylase carboxyl transferase subunit beta (314 aa).

The CoA carboxyltransferase N-terminal domain maps to 24–293 (LWIKCPDTGQ…IDAAPEPSPA (270 aa)). The segment at 283–314 (EIDAAPEPSPAAEEPAEPMPAPEAAAPSAPPA) is disordered. Composition is skewed to low complexity over residues 284 to 295 (IDAAPEPSPAAE) and 304 to 314 (PEAAAPSAPPA).

It belongs to the AccD/PCCB family. Acetyl-CoA carboxylase is a heterohexamer composed of biotin carboxyl carrier protein (AccB), biotin carboxylase (AccC) and two subunits each of ACCase subunit alpha (AccA) and ACCase subunit beta (AccD).

It is found in the cytoplasm. It catalyses the reaction N(6)-carboxybiotinyl-L-lysyl-[protein] + acetyl-CoA = N(6)-biotinyl-L-lysyl-[protein] + malonyl-CoA. It functions in the pathway lipid metabolism; malonyl-CoA biosynthesis; malonyl-CoA from acetyl-CoA: step 1/1. Its function is as follows. Component of the acetyl coenzyme A carboxylase (ACC) complex. Biotin carboxylase (BC) catalyzes the carboxylation of biotin on its carrier protein (BCCP) and then the CO(2) group is transferred by the transcarboxylase to acetyl-CoA to form malonyl-CoA. This chain is Acetyl-coenzyme A carboxylase carboxyl transferase subunit beta, found in Nitrobacter hamburgensis (strain DSM 10229 / NCIMB 13809 / X14).